Reading from the N-terminus, the 292-residue chain is [LysW]-aminoadipate kinase (292 aa).

The substrate site is built by arginine 89 and asparagine 193.

It belongs to the acetylglutamate kinase family. LysZ subfamily.

It is found in the cytoplasm. It carries out the reaction [amino-group carrier protein]-C-terminal-N-(1,4-dicarboxybutan-1-yl)-L-glutamine + ATP = [amino-group carrier protein]-C-terminal-N-(1-carboxy-5-phosphooxy-5-oxopentan-1-yl)-L-glutamine + ADP. The protein operates within amino-acid biosynthesis; L-lysine biosynthesis via AAA pathway; L-lysine from L-alpha-aminoadipate (Thermus route): step 2/5. Catalyzes the phosphorylation of LysW-gamma-alpha-aminoadipate. The protein is [LysW]-aminoadipate kinase of Deinococcus radiodurans (strain ATCC 13939 / DSM 20539 / JCM 16871 / CCUG 27074 / LMG 4051 / NBRC 15346 / NCIMB 9279 / VKM B-1422 / R1).